A 299-amino-acid chain; its full sequence is Acetyl-hydrolase (299 aa).

An Involved in the stabilization of the negatively charged intermediate by the formation of the oxyanion hole motif is present at residues 73–75 (HGG). Residues Ser143, Glu237, and His267 contribute to the active site.

It belongs to the 'GDXG' lipolytic enzyme family.

It participates in secondary metabolite biosynthesis; bialaphos biosynthesis. This protein removes the N-acetyl group from bialaphos as one of the final steps of biosynthesis of phosphinothricin tripeptide (PTT), also known as bialaphos (BA), a natural-product antibiotic and potent herbicide. The protein is Acetyl-hydrolase (bah) of Streptomyces hygroscopicus.